A 549-amino-acid polypeptide reads, in one-letter code: Oxygen-dependent choline dehydrogenase (549 aa).

4–33 (DFVIIGSGSAGSALAYRLSEDGKNSVLVIE) is a binding site for FAD. His465 serves as the catalytic Proton acceptor.

This sequence belongs to the GMC oxidoreductase family. FAD serves as cofactor.

It catalyses the reaction choline + A = betaine aldehyde + AH2. It carries out the reaction betaine aldehyde + NAD(+) + H2O = glycine betaine + NADH + 2 H(+). It functions in the pathway amine and polyamine biosynthesis; betaine biosynthesis via choline pathway; betaine aldehyde from choline (cytochrome c reductase route): step 1/1. In terms of biological role, involved in the biosynthesis of the osmoprotectant glycine betaine. Catalyzes the oxidation of choline to betaine aldehyde and betaine aldehyde to glycine betaine at the same rate. This chain is Oxygen-dependent choline dehydrogenase, found in Rhizobium etli (strain CIAT 652).